Consider the following 618-residue polypeptide: MPDPAAHLPFFYGSISRAEAEEHLKLAGMADGLFLLRQCLRSLGGYVLSLVHDVRFHHFPIERQLNGTYAIAGGKAHCGPAELCQFYSQDPDGLPCNLRKPCNRPPGLEPQPGVFDCLRDAMVRDYVRQTWKLEGDALEQAIISQAPQVEKLIATTAHERMPWYHSSLTREEAERKLYSGQQTDGKFLLRPRKEQGTYALSLVYGKTVYHYLISQDKAGKYCIPEGTKFDTLWQLVEYLKLKADGLIYRLKEVCPNSSASAAVAAPTLPAHPSTFTQPQRRVDTLNSDGYTPEPARLASSTDKPRPMPMDTSVYESPYSDPEELKDKKLFLKRENLLVADIELGCGNFGSVRQGVYRMRKKQIDVAIKVLKQGTEKADKDEMMREAQIMHQLDNPYIVRLIGVCQAEALMLVMEMAGGGPLHKFLLGKKEEIPVSNVAELLHQVAMGMKYLEEKNFVHRDLAARNVLLVNRHYAKISDFGLSKALGADDSYYTARSAGKWPLKWYAPECINFRKFSSRSDVWSYGVTMWEAFSYGQKPYKKMKGPEVLDFIKQGKRMECPPECPPEMYALMSDCWIYKWEDRPDFLTVEQRMRNYYYSLASRAEGPPQCEQVAEAACG.

In terms of domain architecture, SH2 1 spans 10–102 (FFYGSISRAE…GLPCNLRKPC (93 aa)). Residues 103–162 (NRPPGLEPQPGVFDCLRDAMVRDYVRQTWKLEGDALEQAIISQAPQVEKLIATTAHERMP) are interdomain A. The SH2 2 domain maps to 163-254 (WYHSSLTREE…GLIYRLKEVC (92 aa)). Position 248 is a phosphotyrosine (Tyr-248). Residues 255–336 (PNSSASAAVA…KKLFLKRENL (82 aa)) are interdomain B. Residues 270-320 (AHPSTFTQPQRRVDTLNSDGYTPEPARLASSTDKPRPMPMDTSVYESPYSD) form a disordered region. Residues 273 to 289 (STFTQPQRRVDTLNSDG) show a composition bias toward polar residues. The residue at position 287 (Ser-287) is a Phosphoserine. Residue Tyr-290 is modified to Phosphotyrosine. Tyr-314 is subject to Phosphotyrosine; by LCK. Residue Tyr-318 is modified to Phosphotyrosine. Residues 337 to 597 (LVADIELGCG…VEQRMRNYYY (261 aa)) enclose the Protein kinase domain. Residues 343-351 (LGCGNFGSV) and Lys-368 contribute to the ATP site. Asp-460 functions as the Proton acceptor in the catalytic mechanism. Phosphotyrosine occurs at positions 491 and 492. A Glycyl lysine isopeptide (Lys-Gly) (interchain with G-Cter in ubiquitin) cross-link involves residue Lys-543.

Belongs to the protein kinase superfamily. Tyr protein kinase family. SYK/ZAP-70 subfamily. As to quaternary structure, interacts with CD247/CD3Z; this interaction docks ZAP70 at the stimulated TCR. Interacts with NFAM1. Interacts with adapter protein SLA; this interaction negatively regulates T-cell receptor signaling. Interacts with VAV1. Interacts with CBL; this interaction promotes ubiquitination, internalization and subsequent degradation of CD247/CD3Z. Identified in a complex with CBL and UBE2L3. Interacts with SHB. Interacts with adapter protein SLA2; this interaction negatively regulates T-cell receptor signaling. Interacts with CBLB. Interacts (via SH2 domains) with RHOH; this interaction regulates ZAP70 subcellular localization. Interacts with DEF6. Interacts (ubiquitinated form) with OTUD7B and UBASH3B. Phosphorylated on tyrosine residues upon T-cell antigen receptor (TCR) stimulation. Phosphorylation of Tyr-314 and Tyr-314 are essential for ZAP70 positive function on T-lymphocyte activation whereas Tyr-290 has a negative regulatory role. Within the C-terminal kinase domain, Tyr-491 and Tyr-492 are phosphorylated after TCR induction, Tyr-491 playing a negative regulatory role and Tyr-492 a positive. Tyr-492 is dephosphorylated by PTN22. In terms of processing, ubiquitinated in response to T cell activation. Deubiquitinated by OTUD7B. As to expression, isoform 1 and isoform 2 are expressed in thymus, spleen and lymph nodes.

The protein localises to the cytoplasm. Its subcellular location is the cell membrane. It carries out the reaction L-tyrosyl-[protein] + ATP = O-phospho-L-tyrosyl-[protein] + ADP + H(+). Activated by phosphorylation at Tyr-492 in the activation loop. Its function is as follows. Tyrosine kinase that plays an essential role in regulation of the adaptive immune response. Regulates motility, adhesion and cytokine expression of mature T-cells, as well as thymocyte development. Also contributes to the development and activation of primary B-lymphocytes. When antigen presenting cells (APC) activate T-cell receptor (TCR), a serie of phosphorylations lead to the recruitment of ZAP70 to the doubly phosphorylated TCR component CD3Z through ITAM motif at the plasma membrane. This recruitment serves to localization to the stimulated TCR and to relieve its autoinhibited conformation. Release of ZAP70 active conformation is further stabilized by phosphorylation mediated by LCK. Subsequently, ZAP70 phosphorylates at least 2 essential adapter proteins: LAT and LCP2. In turn, a large number of signaling molecules are recruited and ultimately lead to lymphokine production, T-cell proliferation and differentiation. Furthermore, ZAP70 controls cytoskeleton modifications, adhesion and mobility of T-lymphocytes, thus ensuring correct delivery of effectors to the APC. ZAP70 is also required for TCR-CD3Z internalization and degradation through interaction with the E3 ubiquitin-protein ligase CBL and adapter proteins SLA and SLA2. Thus, ZAP70 regulates both T-cell activation switch on and switch off by modulating TCR expression at the T-cell surface. During thymocyte development, ZAP70 promotes survival and cell-cycle progression of developing thymocytes before positive selection (when cells are still CD4/CD8 double negative). Additionally, ZAP70-dependent signaling pathway may also contribute to primary B-cells formation and activation through B-cell receptor (BCR). In Mus musculus (Mouse), this protein is Tyrosine-protein kinase ZAP-70 (Zap70).